A 1994-amino-acid chain; its full sequence is Protein-methionine sulfoxide oxidase mical3a (1994 aa).

The monooxygenase domain stretch occupies residues 2 to 498; it reads GDGGVNAVGE…RHLLDTGETR (497 aa). FAD is bound by residues C101, 101–129, E120, R122, R127, N129, and D402; that span reads CGLR…SRNN. A Calponin-homology (CH) domain is found at 521–627; sequence IVRSSKLLNW…YLSQFYEMFK (107 aa). A disordered region spans residues 666–708; the sequence is ISRKRNPKDKKEKELDGLGKRRKTSQAGQSEDEELQRANRDDR. Basic and acidic residues predominate over residues 674–684; sequence DKKEKELDGLG. In terms of domain architecture, LIM zinc-binding spans 772-834; sequence DVCFFCRKRV…KPHYCYRLSG (63 aa). Disordered regions lie at residues 843–900, 917–1064, 1176–1263, 1281–1476, 1493–1555, and 1598–1747; these read PAAA…LKGT, EELE…AEAR, SQPV…ELKK, LGLT…REEV, VEDT…SPEA, and KVAW…LRLR. 2 stretches are compositionally biased toward acidic residues: residues 917–926 and 951–961; these read EELEEVPEET and SDMEEEDEDAE. The segment covering 975–987 has biased composition (basic and acidic residues); it reads EAVELHAKLKGES. Acidic residues-rich tracts occupy residues 1001-1037 and 1046-1060; these read GEMD…DPEA and PGTE…SDAE. A compositionally biased stretch (polar residues) spans 1200 to 1215; that stretch reads PTGNPLSPICTQSQPC. Basic and acidic residues-rich tracts occupy residues 1249 to 1263 and 1287 to 1297; these read RTNE…ELKK and ERSKTAVEKSI. Composition is skewed to low complexity over residues 1299 to 1314 and 1358 to 1368; these read KTPT…YTPE and SSSSGLGLNGS. Positions 1369–1389 are enriched in polar residues; sequence VTTSQTAASDSYNNSDSTMLT. Pro residues predominate over residues 1437–1458; that stretch reads PVSPPQPKQKPVTAPVPTPRTN. The segment covering 1464-1476 has biased composition (basic and acidic residues); that stretch reads RVKEPNKPRREEV. Residues 1616–1635 show a composition bias toward basic and acidic residues; sequence AQKDSAVKALESKKQADTLP. Over residues 1649-1660 the composition is skewed to low complexity; it reads SSVTSSESSTGG. The span at 1661–1679 shows a compositional bias: basic residues; that stretch reads KSKKRSSLFSPRKNKKEKK. Basic and acidic residues predominate over residues 1680-1693; it reads AKNERLSSTEETPP. Low complexity predominate over residues 1718–1729; sequence CPSTPSSSTTGD. The span at 1730 to 1746 shows a compositional bias: basic and acidic residues; sequence SGKKKDSPLDRSSDLRL. 2 coiled-coil regions span residues 1796-1855 and 1894-1960; these read EEEL…KALR and QEKN…EQRD. Positions 1816–1982 constitute a bMERB domain; the sequence is KQEELKRLHR…EKEEDKDLEA (167 aa).

The protein belongs to the Mical family. Requires FAD as cofactor.

The protein resides in the cytoplasm. The protein localises to the cytoskeleton. Its subcellular location is the nucleus. The enzyme catalyses L-methionyl-[F-actin] + NADPH + O2 + H(+) = L-methionyl-(R)-S-oxide-[F-actin] + NADP(+) + H2O. Its function is as follows. Monooxygenase that promotes depolymerization of F-actin by mediating oxidation of specific methionine residues on actin. Acts by modifying actin subunits through the addition of oxygen to form methionine-sulfoxide, leading to promote actin filament severing and prevent repolymerization. Involved in exocytic vesicles tethering and fusion: the monooxygenase activity is required for this process. The protein is Protein-methionine sulfoxide oxidase mical3a (mical3a) of Danio rerio (Zebrafish).